Here is a 43-residue protein sequence, read N- to C-terminus: Protein PsbN (43 aa).

Residues 5–27 (NLVTISISCLLVSLTGYAIYTSF) traverse the membrane as a helical segment.

The protein belongs to the PsbN family.

It is found in the plastid. Its subcellular location is the chloroplast thylakoid membrane. In terms of biological role, may play a role in photosystem I and II biogenesis. This is Protein PsbN from Gnetum gnemon (Spanish joint-fir).